A 293-amino-acid polypeptide reads, in one-letter code: Fructose-bisphosphate aldolase (293 aa).

Serine 50 serves as a coordination point for D-glyceraldehyde 3-phosphate. Catalysis depends on aspartate 85, which acts as the Proton donor. Residues histidine 86, aspartate 106, glutamate 136, and histidine 178 each contribute to the Zn(2+) site. Glycine 179 is a dihydroxyacetone phosphate binding site. Zn(2+) is bound at residue histidine 208. Dihydroxyacetone phosphate-binding positions include 209-211 (GGS) and 230-233 (NVNT).

It belongs to the class II fructose-bisphosphate aldolase family. Zn(2+) is required as a cofactor.

It catalyses the reaction beta-D-fructose 1,6-bisphosphate = D-glyceraldehyde 3-phosphate + dihydroxyacetone phosphate. The protein operates within carbohydrate degradation; glycolysis; D-glyceraldehyde 3-phosphate and glycerone phosphate from D-glucose: step 4/4. Functionally, catalyzes the aldol condensation of dihydroxyacetone phosphate (DHAP or glycerone-phosphate) with glyceraldehyde 3-phosphate (G3P) to form fructose 1,6-bisphosphate (FBP) in gluconeogenesis and the reverse reaction in glycolysis. The protein is Fructose-bisphosphate aldolase (fba) of Streptococcus pyogenes serotype M6 (strain ATCC BAA-946 / MGAS10394).